A 141-amino-acid polypeptide reads, in one-letter code: Hemoglobin subunit alpha (141 aa).

The Globin domain maps to 1–141; the sequence is VLSPADKTNV…VSTVLTSKYR (141 aa). A Phosphoserine modification is found at S3. K7 bears the N6-succinyllysine mark. T8 carries the phosphothreonine modification. Position 11 is an N6-succinyllysine (K11). K16 carries the post-translational modification N6-acetyllysine; alternate. K16 carries the post-translational modification N6-succinyllysine; alternate. Residue Y24 is modified to Phosphotyrosine. Position 35 is a phosphoserine (S35). At K40 the chain carries N6-succinyllysine. The residue at position 49 (S49) is a Phosphoserine. H58 provides a ligand contact to O2. Residue H87 coordinates heme b. S102 carries the phosphoserine modification. T108 is modified (phosphothreonine). A Phosphoserine modification is found at S124. T134 and T137 each carry phosphothreonine. S138 is subject to Phosphoserine.

Belongs to the globin family. As to quaternary structure, heterotetramer of two alpha chains and two beta chains. In terms of tissue distribution, red blood cells.

Functionally, involved in oxygen transport from the lung to the various peripheral tissues. Hemopressin acts as an antagonist peptide of the cannabinoid receptor CNR1. Hemopressin-binding efficiently blocks cannabinoid receptor CNR1 and subsequent signaling. The chain is Hemoglobin subunit alpha (HBA) from Lutra lutra (European river otter).